The chain runs to 292 residues: UDP-3-O-acyl-N-acetylglucosamine deacetylase (292 aa).

Positions 76, 232, and 236 each coordinate Zn(2+). Histidine 259 functions as the Proton donor in the catalytic mechanism.

It belongs to the LpxC family. Zn(2+) serves as cofactor.

The enzyme catalyses a UDP-3-O-[(3R)-3-hydroxyacyl]-N-acetyl-alpha-D-glucosamine + H2O = a UDP-3-O-[(3R)-3-hydroxyacyl]-alpha-D-glucosamine + acetate. Its pathway is glycolipid biosynthesis; lipid IV(A) biosynthesis; lipid IV(A) from (3R)-3-hydroxytetradecanoyl-[acyl-carrier-protein] and UDP-N-acetyl-alpha-D-glucosamine: step 2/6. Functionally, catalyzes the hydrolysis of UDP-3-O-myristoyl-N-acetylglucosamine to form UDP-3-O-myristoylglucosamine and acetate, the committed step in lipid A biosynthesis. The protein is UDP-3-O-acyl-N-acetylglucosamine deacetylase of Thermodesulfovibrio yellowstonii (strain ATCC 51303 / DSM 11347 / YP87).